The sequence spans 115 residues: Large ribosomal subunit protein bL20 (115 aa).

The protein belongs to the bacterial ribosomal protein bL20 family.

Its function is as follows. Binds directly to 23S ribosomal RNA and is necessary for the in vitro assembly process of the 50S ribosomal subunit. It is not involved in the protein synthesizing functions of that subunit. This is Large ribosomal subunit protein bL20 from Microcystis aeruginosa (strain NIES-843 / IAM M-2473).